The following is a 352-amino-acid chain: N-terminal EF-hand calcium-binding protein 1 (352 aa).

Position 4 is a phosphoserine (serine 4). EF-hand domains follow at residues 26–61 (KGMS…GVLS) and 60–95 (LSGE…HLGE). Ca(2+) contacts are provided by aspartate 39, asparagine 41, aspartate 43, lysine 45, and glutamate 50. The stretch at 135–163 (LLKETLNQLQSLQNSLECAMETTEEQTRQ) forms a coiled coil. Residues 155 to 202 (ETTEEQTRQERQGPSKPEVLSIQWPGKRSSRRVQRHNSFSPNSPQFNV) are disordered. The segment covering 190-202 (HNSFSPNSPQFNV) has biased composition (polar residues). 2 positions are modified to phosphoserine: serine 192 and serine 197. Residues 209–275 (EEDNQWMTQI…EEFQLALKHY (67 aa)) adopt a coiled-coil conformation. Residues 252-340 (MLVQRQMSVT…LETPELTSTM (89 aa)) enclose the ABM domain.

In terms of assembly, interacts with STX1. May interact with CPNE6.

The protein localises to the cytoplasm. This chain is N-terminal EF-hand calcium-binding protein 1 (Necab1), found in Rattus norvegicus (Rat).